The following is a 551-amino-acid chain: MSALLSEDYLNDYISPALACTKPTEIKKEKFVTEDGEFQVGVEPQELEKVTISLSDCLACSGCITSSEEIMLSQQSHSVFLDAWRELGFDKCGSAGDAQCTNKLVVSISPHCRASMARYYGVDVDAADYAILRVFKEVFHATSVIGDGAGRLLSVKRVVEELMERRKASQGTALSSICPGFLIYTEKTKPKLVPMLLNVKSAQQVTGALFKEIALEEGYDVDTSLKDGKRTNVQYHLTIVPCFDKKLEASRPDGEGEVNCVITPREVLAMLGEMGVSFRKYLGDWASLDKQLQQSQLGMLRAEMSPAGWDPLLHWSIPANGDGYSDGYAYQYACTVRDAHVASGCAAQVVSVPGKNADVLEYRVVEPSSEGGKVIARACVLSGFRNIQNLCRKLDPSGHKKRSVRRVAALRSRGRKDSSSEDSTGTPSAISNALGGTANPAECDYVEVSACPSGSINGGGLLMELAPEREEMGETPLPSSTIGGNARRRQQQLQELQAMYKAQIRITDETPTSLPPAALPPLPPQYTMQYTFYIQEEDPAKPDIVTVGNTW.

[4Fe-4S] cluster is bound by residues Cys20, Cys57, Cys60, Cys63, Cys178, and Cys242. Residues 395–435 form a disordered region; sequence DPSGHKKRSVRRVAALRSRGRKDSSSEDSTGTPSAISNALG. Residues 421–431 show a composition bias toward polar residues; sequence EDSTGTPSAIS. Cys451 is a binding site for [4Fe-4S] cluster.

It belongs to the NARF family.

In terms of biological role, component of the cytosolic Fe/S protein assembly machinery. Required for maturation of extramitochondrial Fe/S proteins. May play a role in the transfer of pre-assembled Fe/S clusters to target apoproteins. The chain is Cytosolic Fe-S cluster assembly factor NAR1 (NAR1) from Candida glabrata (strain ATCC 2001 / BCRC 20586 / JCM 3761 / NBRC 0622 / NRRL Y-65 / CBS 138) (Yeast).